Reading from the N-terminus, the 312-residue chain is Probable deoxyhypusine synthase (312 aa).

The Nucleophile role is filled by lysine 285.

This sequence belongs to the deoxyhypusine synthase family. NAD(+) serves as cofactor.

It catalyses the reaction [eIF5A protein]-L-lysine + spermidine = [eIF5A protein]-deoxyhypusine + propane-1,3-diamine. Its pathway is protein modification; eIF5A hypusination. Catalyzes the NAD-dependent oxidative cleavage of spermidine and the subsequent transfer of the butylamine moiety of spermidine to the epsilon-amino group of a specific lysine residue of the eIF-5A precursor protein to form the intermediate deoxyhypusine residue. The chain is Probable deoxyhypusine synthase (dys) from Saccharolobus solfataricus (strain ATCC 35092 / DSM 1617 / JCM 11322 / P2) (Sulfolobus solfataricus).